We begin with the raw amino-acid sequence, 432 residues long: Histidine--tRNA ligase (432 aa).

Belongs to the class-II aminoacyl-tRNA synthetase family. In terms of assembly, homodimer.

The protein resides in the cytoplasm. It carries out the reaction tRNA(His) + L-histidine + ATP = L-histidyl-tRNA(His) + AMP + diphosphate + H(+). This chain is Histidine--tRNA ligase, found in Symbiobacterium thermophilum (strain DSM 24528 / JCM 14929 / IAM 14863 / T).